Reading from the N-terminus, the 360-residue chain is Probable arginine kinase ZC434.8 (360 aa).

In terms of domain architecture, Phosphagen kinase N-terminal spans 10–92 (SIEEVYTKLQ…FNPVIEEYHN (83 aa)). Residue 65–69 (GVGIY) participates in substrate binding. The region spanning 122-359 (FIVSTRIRCG…KKLIELEKAA (238 aa)) is the Phosphagen kinase C-terminal domain. Residues 125-129 (STRIR) and H189 each bind ATP. Residue E229 participates in substrate binding. Position 233 (R233) interacts with ATP. A substrate-binding site is contributed by C275. ATP-binding positions include 284–288 (RASVH), 312–317 (RGIHGE), and D327. E317 is a substrate binding site.

It belongs to the ATP:guanido phosphotransferase family.

The enzyme catalyses L-arginine + ATP = N(omega)-phospho-L-arginine + ADP + H(+). The sequence is that of Probable arginine kinase ZC434.8 from Caenorhabditis elegans.